The primary structure comprises 88 residues: Small ribosomal subunit protein eS25B (88 aa).

The protein belongs to the eukaryotic ribosomal protein eS25 family. In terms of assembly, component of the small ribosomal subunit (SSU). Mature yeast ribosomes consist of a small (40S) and a large (60S) subunit. The 40S small subunit contains 1 molecule of ribosomal RNA (18S rRNA) and at least 33 different proteins. The large 60S subunit contains 3 rRNA molecules (25S, 5.8S and 5S rRNA) and at least 46 different proteins.

The protein resides in the cytoplasm. Its function is as follows. Component of the ribosome, a large ribonucleoprotein complex responsible for the synthesis of proteins in the cell. The small ribosomal subunit (SSU) binds messenger RNAs (mRNAs) and translates the encoded message by selecting cognate aminoacyl-transfer RNA (tRNA) molecules. The large subunit (LSU) contains the ribosomal catalytic site termed the peptidyl transferase center (PTC), which catalyzes the formation of peptide bonds, thereby polymerizing the amino acids delivered by tRNAs into a polypeptide chain. The nascent polypeptides leave the ribosome through a tunnel in the LSU and interact with protein factors that function in enzymatic processing, targeting, and the membrane insertion of nascent chains at the exit of the ribosomal tunnel. This is Small ribosomal subunit protein eS25B (rps2501) from Schizosaccharomyces pombe (strain 972 / ATCC 24843) (Fission yeast).